Consider the following 319-residue polypeptide: tRNA pseudouridine synthase B (319 aa).

Aspartate 47 serves as the catalytic Nucleophile.

It belongs to the pseudouridine synthase TruB family. Type 1 subfamily.

It carries out the reaction uridine(55) in tRNA = pseudouridine(55) in tRNA. Functionally, responsible for synthesis of pseudouridine from uracil-55 in the psi GC loop of transfer RNAs. This is tRNA pseudouridine synthase B from Pseudoalteromonas translucida (strain TAC 125).